The following is a 201-amino-acid chain: Dephospho-CoA kinase (201 aa).

Residues 4–201 enclose the DPCK domain; the sequence is VIGLTGGIAS…LLDTWSNIEK (198 aa). 12 to 17 serves as a coordination point for ATP; sequence ASGKST.

Belongs to the CoaE family.

It localises to the cytoplasm. It carries out the reaction 3'-dephospho-CoA + ATP = ADP + CoA + H(+). It functions in the pathway cofactor biosynthesis; coenzyme A biosynthesis; CoA from (R)-pantothenate: step 5/5. In terms of biological role, catalyzes the phosphorylation of the 3'-hydroxyl group of dephosphocoenzyme A to form coenzyme A. In Bacillus licheniformis (strain ATCC 14580 / DSM 13 / JCM 2505 / CCUG 7422 / NBRC 12200 / NCIMB 9375 / NCTC 10341 / NRRL NRS-1264 / Gibson 46), this protein is Dephospho-CoA kinase.